The sequence spans 173 residues: MAIILGVDPGSRITGYGVIQCQGRHQLYLGSGCIRTSSDELPDRLKQIFDGLQEIIRQYQPSQFAIERVFMAKNADSALKLGQARGAAIVAATVAGLPVAEYSATQIKNAVVGTGRAQKAQVQHMVQQMLKLPAAPQADAADALAVAMCHYHTHQSLVALGGRASVRTYGRYR.

Active-site residues include D8, E67, and D139. D8, E67, and D139 together coordinate Mg(2+).

Belongs to the RuvC family. As to quaternary structure, homodimer which binds Holliday junction (HJ) DNA. The HJ becomes 2-fold symmetrical on binding to RuvC with unstacked arms; it has a different conformation from HJ DNA in complex with RuvA. In the full resolvosome a probable DNA-RuvA(4)-RuvB(12)-RuvC(2) complex forms which resolves the HJ. Mg(2+) serves as cofactor.

It is found in the cytoplasm. It carries out the reaction Endonucleolytic cleavage at a junction such as a reciprocal single-stranded crossover between two homologous DNA duplexes (Holliday junction).. Its function is as follows. The RuvA-RuvB-RuvC complex processes Holliday junction (HJ) DNA during genetic recombination and DNA repair. Endonuclease that resolves HJ intermediates. Cleaves cruciform DNA by making single-stranded nicks across the HJ at symmetrical positions within the homologous arms, yielding a 5'-phosphate and a 3'-hydroxyl group; requires a central core of homology in the junction. The consensus cleavage sequence is 5'-(A/T)TT(C/G)-3'. Cleavage occurs on the 3'-side of the TT dinucleotide at the point of strand exchange. HJ branch migration catalyzed by RuvA-RuvB allows RuvC to scan DNA until it finds its consensus sequence, where it cleaves and resolves the cruciform DNA. This chain is Crossover junction endodeoxyribonuclease RuvC, found in Shewanella amazonensis (strain ATCC BAA-1098 / SB2B).